The chain runs to 303 residues: Cobalamin biosynthesis protein CobD (303 aa).

The next 4 helical transmembrane spans lie at 65-85 (LLAWLLSLLPGIGWLAEIVLL), 147-167 (DAVFAALFWFIVAGAPGVVLY), 235-255 (AGPVMAAGAGALGVVLGGAAI), and 283-303 (LVWAGVGVWLLVLLFGGWLYA).

This sequence belongs to the CobD/CbiB family.

The protein localises to the cell membrane. The protein operates within cofactor biosynthesis; adenosylcobalamin biosynthesis. Functionally, converts cobyric acid to cobinamide by the addition of aminopropanol on the F carboxylic group. The sequence is that of Cobalamin biosynthesis protein CobD from Stutzerimonas stutzeri (strain A1501) (Pseudomonas stutzeri).